Reading from the N-terminus, the 460-residue chain is Bifunctional protein GlmU (460 aa).

The interval 1–232 (MAISAALILA…PDEIMGVNDR (232 aa)) is pyrophosphorylase. UDP-N-acetyl-alpha-D-glucosamine is bound by residues 9 to 12 (LAAG), K23, Q75, and 80 to 81 (GT). D105 is a binding site for Mg(2+). Positions 142, 157, 172, and 230 each coordinate UDP-N-acetyl-alpha-D-glucosamine. Residue N230 participates in Mg(2+) binding. The segment at 233–253 (VQLAHAARVLRQRVNLQLMLA) is linker. An N-acetyltransferase region spans residues 254–460 (GVTLIDPDQT…GWCLKKRDNG (207 aa)). Residues R336 and K354 each coordinate UDP-N-acetyl-alpha-D-glucosamine. The Proton acceptor role is filled by H366. Positions 369 and 380 each coordinate UDP-N-acetyl-alpha-D-glucosamine. Acetyl-CoA contacts are provided by residues 389–390 (NY), S408, A426, and R443.

This sequence in the N-terminal section; belongs to the N-acetylglucosamine-1-phosphate uridyltransferase family. It in the C-terminal section; belongs to the transferase hexapeptide repeat family. In terms of assembly, homotrimer. Mg(2+) serves as cofactor.

It is found in the cytoplasm. It carries out the reaction alpha-D-glucosamine 1-phosphate + acetyl-CoA = N-acetyl-alpha-D-glucosamine 1-phosphate + CoA + H(+). It catalyses the reaction N-acetyl-alpha-D-glucosamine 1-phosphate + UTP + H(+) = UDP-N-acetyl-alpha-D-glucosamine + diphosphate. It participates in nucleotide-sugar biosynthesis; UDP-N-acetyl-alpha-D-glucosamine biosynthesis; N-acetyl-alpha-D-glucosamine 1-phosphate from alpha-D-glucosamine 6-phosphate (route II): step 2/2. Its pathway is nucleotide-sugar biosynthesis; UDP-N-acetyl-alpha-D-glucosamine biosynthesis; UDP-N-acetyl-alpha-D-glucosamine from N-acetyl-alpha-D-glucosamine 1-phosphate: step 1/1. The protein operates within bacterial outer membrane biogenesis; LPS lipid A biosynthesis. Its function is as follows. Catalyzes the last two sequential reactions in the de novo biosynthetic pathway for UDP-N-acetylglucosamine (UDP-GlcNAc). The C-terminal domain catalyzes the transfer of acetyl group from acetyl coenzyme A to glucosamine-1-phosphate (GlcN-1-P) to produce N-acetylglucosamine-1-phosphate (GlcNAc-1-P), which is converted into UDP-GlcNAc by the transfer of uridine 5-monophosphate (from uridine 5-triphosphate), a reaction catalyzed by the N-terminal domain. The sequence is that of Bifunctional protein GlmU from Trichlorobacter lovleyi (strain ATCC BAA-1151 / DSM 17278 / SZ) (Geobacter lovleyi).